Reading from the N-terminus, the 220-residue chain is CRISPR system Cms endoribonuclease Csm3 (220 aa).

Belongs to the CRISPR-associated Csm3 family. As to quaternary structure, part of the Csm effector complex that includes at least Cas10(1), Csm2(3), Csm3(5), Csm4(1), Csm5(1) and mature crRNA. The Csm complex is elongated and slightly twisted with a maximal length of 215 Angstroms and a diameter of 75-80 Angstroms. It has been modeled to have a central protein filamant of Csm3 subunits along which the dsRNA helix of paired crRNA and target RNA binds. The filament is capped at one end by Cas10 and Csm4 and at the other end by Csm5; ssDNA is thought to bind to the N-terminal HD domain of Cas10. Csm with a precursor crRNA does not include Csm5, while Cas6, the enzyme probably involved in pre-crRNA processing, is found associated with a subset of the Csm complex. A metal cation is required as a cofactor.

Its activity is regulated as follows. Target ssRNase is inhibited by EDTA. Its function is as follows. CRISPR (clustered regularly interspaced short palindromic repeat) is an adaptive immune system that provides protection against mobile genetic elements (viruses, transposable elements and conjugative plasmids). CRISPR clusters contain spacers, sequences complementary to antecedent mobile elements, and target invading nucleic acids. CRISPR clusters are transcribed and processed into CRISPR RNA (crRNA). The type III-A Csm effector complex binds crRNA and acts as a crRNA-guided RNase, DNase and cyclic oligoadenylate synthase; binding of target RNA cognate to the crRNA is required for all activities. In a heterologous host this Csm effector complex restricts ssRNA phage MS2, suggesting it may target RNA viruses in vivo. In terms of biological role, csm functions as a non-specific ssDNase. Base-pairing between crRNA and target RNA to form a ternary Csm complex activates a ssDNase activity; target RNA cleavage suppresses the ssDNase, a temporal control that prevents uncontrolled DNA degradation. Viral RNA transcripts probably tether the Csm complex to the viral genome, recruiting Cas10 ssDNA activity which is able to degrade DNA in the transcription bubble, spatially controlling the DNase activity. Functionally, this subunit has the target ssRNA endonuclease activity; it cleaves multiple sites in the target RNA at 6 nucleotide intervals. The number of cleavage sites in the target RNA correlates with the number of Csm3 subunits in the Csm effector complex. In the Csm complex target RNA and ssDNA are cleaved simultaneously, although RNase activity (of Csm3) is much faster. RNA cleavage by Csm3 is not required for ssDNase activity as Csm complex with inactive Csm3 still has ssDNase activity; however as the cleaved target RNA products dissociate away ssDNase activity decreases. This chain is CRISPR system Cms endoribonuclease Csm3, found in Streptococcus thermophilus.